Consider the following 509-residue polypeptide: Aldehyde dehydrogenase 1A1 (509 aa).

NAD(+)-binding positions include 175 to 178 (IPWN), 201 to 204 (KPAE), 234 to 235 (GP), 254 to 255 (GS), and 277 to 279 (ELG). Catalysis depends on glutamate 277, which acts as the Proton acceptor. Cysteine 311 (nucleophile) is an active-site residue. Residues 357 to 361 (EQFQK) and 408 to 410 (EIF) contribute to the NAD(+) site.

Belongs to the aldehyde dehydrogenase family. As to quaternary structure, homotetramer.

It is found in the cytoplasm. The protein localises to the cytosol. It localises to the cell projection. Its subcellular location is the axon. The catalysed reaction is an aldehyde + NAD(+) + H2O = a carboxylate + NADH + 2 H(+). The enzyme catalyses all-trans-retinal + NAD(+) + H2O = all-trans-retinoate + NADH + 2 H(+). It catalyses the reaction 9-cis-retinal + NAD(+) + H2O = 9-cis-retinoate + NADH + 2 H(+). It carries out the reaction 11-cis-retinal + NAD(+) + H2O = 11-cis-retinoate + NADH + 2 H(+). The catalysed reaction is 13-cis-retinal + NAD(+) + H2O = 13-cis-retinoate + NADH + 2 H(+). The enzyme catalyses 3-deoxyglucosone + NAD(+) + H2O = 2-dehydro-3-deoxy-D-gluconate + NADH + 2 H(+). It catalyses the reaction (E)-4-hydroxynon-2-enal + NAD(+) + H2O = (E)-4-hydroxynon-2-enoate + NADH + 2 H(+). It carries out the reaction malonaldehyde + NAD(+) + H2O = 3-oxopropanoate + NADH + 2 H(+). The catalysed reaction is hexanal + NAD(+) + H2O = hexanoate + NADH + 2 H(+). The enzyme catalyses propanal + NAD(+) + H2O = propanoate + NADH + 2 H(+). It catalyses the reaction acetaldehyde + NAD(+) + H2O = acetate + NADH + 2 H(+). It carries out the reaction benzaldehyde + NAD(+) + H2O = benzoate + NADH + 2 H(+). The catalysed reaction is 4-aminobutanal + NAD(+) + H2O = 4-aminobutanoate + NADH + 2 H(+). It participates in cofactor metabolism; retinol metabolism. Functionally, cytosolic dehydrogenase that catalyzes the irreversible oxidation of a wide range of aldehydes to their corresponding carboxylic acid. Functions downstream of retinol dehydrogenases and catalyzes the oxidation of retinaldehyde into retinoic acid, the second step in the oxidation of retinol/vitamin A into retinoic acid. This pathway is crucial to control the levels of retinol and retinoic acid, two important molecules which excess can be teratogenic and cytotoxic. Also oxidizes aldehydes resulting from lipid peroxidation like (E)-4-hydroxynon-2-enal/HNE, malonaldehyde and hexanal that form protein adducts and are highly cytotoxic. By participating for instance to the clearance of (E)-4-hydroxynon-2-enal/HNE in the lens epithelium prevents the formation of HNE-protein adducts and lens opacification. Also functions downstream of fructosamine-3-kinase in the fructosamine degradation pathway by catalyzing the oxidation of 3-deoxyglucosone, the carbohydrate product of fructosamine 3-phosphate decomposition, which is itself a potent glycating agent that may react with lysine and arginine side-chains of proteins. Also has an aminobutyraldehyde dehydrogenase activity and is probably part of an alternative pathway for the biosynthesis of GABA/4-aminobutanoate in midbrain, thereby playing a role in GABAergic synaptic transmission. This chain is Aldehyde dehydrogenase 1A1, found in Gallus gallus (Chicken).